We begin with the raw amino-acid sequence, 1004 residues long: 2-oxoglutarate dehydrogenase E1 component (1004 aa).

This sequence belongs to the alpha-ketoglutarate dehydrogenase family. As to quaternary structure, homodimer. Part of the 2-oxoglutarate dehydrogenase (OGDH) complex composed of E1 (2-oxoglutarate dehydrogenase), E2 (dihydrolipoamide succinyltransferase) and E3 (dihydrolipoamide dehydrogenase); the complex contains multiple copies of the three enzymatic components (E1, E2 and E3). Thiamine diphosphate is required as a cofactor.

The catalysed reaction is N(6)-[(R)-lipoyl]-L-lysyl-[protein] + 2-oxoglutarate + H(+) = N(6)-[(R)-S(8)-succinyldihydrolipoyl]-L-lysyl-[protein] + CO2. In terms of biological role, E1 component of the 2-oxoglutarate dehydrogenase (OGDH) complex which catalyzes the decarboxylation of 2-oxoglutarate, the first step in the conversion of 2-oxoglutarate to succinyl-CoA and CO(2). The chain is 2-oxoglutarate dehydrogenase E1 component from Brucella suis biovar 1 (strain 1330).